The following is a 448-amino-acid chain: tRNA-2-methylthio-N(6)-dimethylallyladenosine synthase (448 aa).

The region spanning 2–119 (KKLYIKTFGC…LSDLIAQRRK (118 aa)) is the MTTase N-terminal domain. The [4Fe-4S] cluster site is built by Cys-11, Cys-48, Cys-82, Cys-156, Cys-160, and Cys-163. In terms of domain architecture, Radical SAM core spans 142–375 (RQTRGSAYVS…LALIEGQSNQ (234 aa)). The TRAM domain maps to 378–444 (QKMLGKTERV…NYTLRGELVE (67 aa)).

Belongs to the methylthiotransferase family. MiaB subfamily. Monomer. [4Fe-4S] cluster is required as a cofactor.

Its subcellular location is the cytoplasm. It carries out the reaction N(6)-dimethylallyladenosine(37) in tRNA + (sulfur carrier)-SH + AH2 + 2 S-adenosyl-L-methionine = 2-methylsulfanyl-N(6)-dimethylallyladenosine(37) in tRNA + (sulfur carrier)-H + 5'-deoxyadenosine + L-methionine + A + S-adenosyl-L-homocysteine + 2 H(+). Functionally, catalyzes the methylthiolation of N6-(dimethylallyl)adenosine (i(6)A), leading to the formation of 2-methylthio-N6-(dimethylallyl)adenosine (ms(2)i(6)A) at position 37 in tRNAs that read codons beginning with uridine. This is tRNA-2-methylthio-N(6)-dimethylallyladenosine synthase from Polynucleobacter asymbioticus (strain DSM 18221 / CIP 109841 / QLW-P1DMWA-1) (Polynucleobacter necessarius subsp. asymbioticus).